The primary structure comprises 586 residues: Actin-related protein 9 (586 aa).

The tract at residues 141 to 169 (STPIVDKDADVDPLQRSTPDDTEPNSEEN) is disordered.

It belongs to the actin family. ARP8 subfamily.

The chain is Actin-related protein 9 (ARP9) from Oryza sativa subsp. indica (Rice).